The following is a 384-amino-acid chain: MAP kinase-activated protein kinase 3 (384 aa).

M1 carries the post-translational modification N-acetylmethionine. The disordered stretch occupies residues 1 to 33 (MDGETAGEKGSLVPPPGALGGSALGGAPAPGVR). A Protein kinase domain is found at 46–306 (QLSKQVLGLG…IMQFMNHPWI (261 aa)). Residues 52–60 (LGLGVNGKV) and K75 contribute to the ATP site. D168 serves as the catalytic Proton acceptor. T203 carries the post-translational modification Phosphothreonine; by MAPK14. At S253 the chain carries Phosphoserine; by MAPK14. At S309 the chain carries Phosphoserine; by autocatalysis. The segment at 309 to 345 (SMVVPQTPLYTARVLQEDKDHWDDVKEEMTSALATMR) is autoinhibitory helix. T315 is modified (phosphothreonine; by MAPK14). A Nuclear export signal (NES) motif is present at residues 337–346 (MTSALATMRV). Residues 347–371 (DYDQVKIKDLKTSNNRLLNKRRKKQ) form a p38 MAPK-binding site region. 2 short sequence motifs (bipartite nuclear localization signal) span residues 352-355 (KIKD) and 366-370 (KRRKK). The tract at residues 359 to 384 (SNNRLLNKRRKKQAGSSSASQGCNNQ) is disordered. The span at 372-384 (AGSSSASQGCNNQ) shows a compositional bias: polar residues.

This sequence belongs to the protein kinase superfamily. CAMK Ser/Thr protein kinase family. In terms of assembly, heterodimer with p38-alpha/MAPK14. The heterodimer with p38-alpha/MAPK14 forms a stable complex: molecules are positioned 'face to face' so that the ATP-binding sites of both kinases are at the heterodimer interface. Interacts with TCF3 and with polycomb proteins, such as PCH2 and BMI1/PCGF4. Phosphorylated and activated by MAPK1/ERK2 and MAPK3/ERK1. Phosphorylated and activated by MAP kinase p38-alpha/MAPK14 at Thr-201, Ser-251 and Thr-313. Isoform 3 is degraded following phosphorylation at Thr-203. As to expression, ubiquitously expressed (at protein level). Isoform 3 is expressed in skeletal muscles and heart.

It localises to the nucleus. The protein resides in the cytoplasm. It carries out the reaction L-seryl-[protein] + ATP = O-phospho-L-seryl-[protein] + ADP + H(+). It catalyses the reaction L-threonyl-[protein] + ATP = O-phospho-L-threonyl-[protein] + ADP + H(+). Activated following phosphorylation by p38-alpha/MAPK14 following various stresses. Inhibited by ligand 5B (2'-[2-(1,3-benzodioxol-5-yl)pyrimidin-4-yl]-5',6'-dihydrospiro[piperidine-4,7'-pyrrolo[3,2-c]pyridin]- 4'(1'h)-one) and ligand P4O (2-[2-(2-fluorophenyl)pyridin-4-yl]-1,5,6,7-tetrahydro- 4h-pyrrolo[3,2-c]pyridin-4-one), 2 ATP-competitive inhibitors. Its function is as follows. Stress-activated serine/threonine-protein kinase involved in cytokines production, endocytosis, cell migration, chromatin remodeling and transcriptional regulation. Following stress, it is phosphorylated and activated by MAP kinase p38-alpha/MAPK14, leading to phosphorylation of substrates. Phosphorylates serine in the peptide sequence, Hyd-X-R-X(2)-S, where Hyd is a large hydrophobic residue. MAPKAPK2 and MAPKAPK3, share the same function and substrate specificity, but MAPKAPK3 kinase activity and level in protein expression are lower compared to MAPKAPK2. Phosphorylates HSP27/HSPB1, KRT18, KRT20, RCSD1, RPS6KA3, TAB3 and TTP/ZFP36. Mediates phosphorylation of HSP27/HSPB1 in response to stress, leading to dissociate HSP27/HSPB1 from large small heat-shock protein (sHsps) oligomers and impair their chaperone activities and ability to protect against oxidative stress effectively. Involved in inflammatory response by regulating tumor necrosis factor (TNF) and IL6 production post-transcriptionally: acts by phosphorylating AU-rich elements (AREs)-binding proteins, such as TTP/ZFP36, leading to regulate the stability and translation of TNF and IL6 mRNAs. Phosphorylation of TTP/ZFP36, a major post-transcriptional regulator of TNF, promotes its binding to 14-3-3 proteins and reduces its ARE mRNA affinity leading to inhibition of dependent degradation of ARE-containing transcript. Involved in toll-like receptor signaling pathway (TLR) in dendritic cells: required for acute TLR-induced macropinocytosis by phosphorylating and activating RPS6KA3. Also acts as a modulator of Polycomb-mediated repression. This is MAP kinase-activated protein kinase 3 (Mapkapk3) from Mus musculus (Mouse).